The following is a 108-amino-acid chain: Large ribosomal subunit protein uL24 (108 aa).

Belongs to the universal ribosomal protein uL24 family. In terms of assembly, part of the 50S ribosomal subunit.

Functionally, one of two assembly initiator proteins, it binds directly to the 5'-end of the 23S rRNA, where it nucleates assembly of the 50S subunit. One of the proteins that surrounds the polypeptide exit tunnel on the outside of the subunit. This Trichlorobacter lovleyi (strain ATCC BAA-1151 / DSM 17278 / SZ) (Geobacter lovleyi) protein is Large ribosomal subunit protein uL24.